A 393-amino-acid chain; its full sequence is Probable pectinesterase 8 (393 aa).

The N-terminal stretch at 1–19 is a signal peptide; it reads MKIISLSISIGIAIIAVLA. 5 N-linked (GlcNAc...) asparagine glycosylation sites follow: Asn100, Asn113, Asn140, Asn156, and Asn163. Substrate is bound at residue Thr165. A glycan (N-linked (GlcNAc...) asparagine) is linked at Asn182. Gln200 contacts substrate. Asp223 acts as the Proton donor in catalysis. The active-site Nucleophile is the Asp244. Asn295 carries N-linked (GlcNAc...) asparagine glycosylation. Arg308 provides a ligand contact to substrate. 3 N-linked (GlcNAc...) asparagine glycosylation sites follow: Asn350, Asn369, and Asn378.

Belongs to the pectinesterase family. Expressed in siliques.

Its subcellular location is the secreted. It is found in the cell wall. It carries out the reaction [(1-&gt;4)-alpha-D-galacturonosyl methyl ester](n) + n H2O = [(1-&gt;4)-alpha-D-galacturonosyl](n) + n methanol + n H(+). It participates in glycan metabolism; pectin degradation; 2-dehydro-3-deoxy-D-gluconate from pectin: step 1/5. In terms of biological role, acts in the modification of cell walls via demethylesterification of cell wall pectin. The chain is Probable pectinesterase 8 (PME8) from Arabidopsis thaliana (Mouse-ear cress).